The primary structure comprises 206 residues: MMPHQLSLVVGLGNPGSKYDGTRHNIGFMALERLARREGFSFRQQAKLHGLSADKGFGDQRLRLLMPQTFMNDSGRSVRAALDWYGFQPEEIVLLVDDMDLPLGRLRLRAQGSAGGHNGLRSTIQHLGTQVFPRLRIGIGAPAENPAERRARTVSHVLGPFSRAEQPCVDAVLDAVLDGLDRLKTQGMERAGTWINGFRYESPSAT.

TRNA is bound at residue Tyr19. The Proton acceptor role is filled by His24. TRNA contacts are provided by Phe70, Asn72, and Asn118.

The protein belongs to the PTH family. In terms of assembly, monomer.

It localises to the cytoplasm. The enzyme catalyses an N-acyl-L-alpha-aminoacyl-tRNA + H2O = an N-acyl-L-amino acid + a tRNA + H(+). In terms of biological role, hydrolyzes ribosome-free peptidyl-tRNAs (with 1 or more amino acids incorporated), which drop off the ribosome during protein synthesis, or as a result of ribosome stalling. Its function is as follows. Catalyzes the release of premature peptidyl moieties from peptidyl-tRNA molecules trapped in stalled 50S ribosomal subunits, and thus maintains levels of free tRNAs and 50S ribosomes. The chain is Peptidyl-tRNA hydrolase from Synechococcus sp. (strain CC9902).